Here is a 374-residue protein sequence, read N- to C-terminus: MKFELDTTDGRARRGRLIFERGTVETPAFMPVGTYGTVKGMTPEEVRATGADILLGNTFHLWLRPGEEIMRKHGDLHDFMNWQRPILTDSGGFQVFSLGDIRKITEEGVHFRSPINGEKIFLDPEKSMQIQHALGSDVVMIFDECTPYPATEDEARKSMQMSLRWAKRSRDEFDRLENPNSLFGIIQGSVYEDLRDESLKGLVEIGFDGYAVGGLAVGEPKEDMHRILEHVCPQIPADKPRYLMGVGKPEDLVEGVRRGIDMFDCVMPTRNARNGHLFTSEGVIKIRNARHRDDTSPLDPKCDCYTCKNYSRAYLYHLDRCNEILGARLNTIHNLRYYQMLMEGLRGAIETGTLDAFVKDFYTSQGREVPELVD.

Asp-89 serves as the catalytic Proton acceptor. Substrate-binding positions include 89–93 (DSGGF), Asp-143, Gln-187, and Gly-214. The tract at residues 245 to 251 (GVGKPED) is RNA binding. Residue Asp-264 is the Nucleophile of the active site. Residues 269–273 (TRNAR) are RNA binding; important for wobble base 34 recognition. Zn(2+) is bound by residues Cys-302, Cys-304, Cys-307, and His-333.

This sequence belongs to the queuine tRNA-ribosyltransferase family. In terms of assembly, homodimer. Within each dimer, one monomer is responsible for RNA recognition and catalysis, while the other monomer binds to the replacement base PreQ1. The cofactor is Zn(2+).

It catalyses the reaction 7-aminomethyl-7-carbaguanine + guanosine(34) in tRNA = 7-aminomethyl-7-carbaguanosine(34) in tRNA + guanine. Its pathway is tRNA modification; tRNA-queuosine biosynthesis. In terms of biological role, catalyzes the base-exchange of a guanine (G) residue with the queuine precursor 7-aminomethyl-7-deazaguanine (PreQ1) at position 34 (anticodon wobble position) in tRNAs with GU(N) anticodons (tRNA-Asp, -Asn, -His and -Tyr). Catalysis occurs through a double-displacement mechanism. The nucleophile active site attacks the C1' of nucleotide 34 to detach the guanine base from the RNA, forming a covalent enzyme-RNA intermediate. The proton acceptor active site deprotonates the incoming PreQ1, allowing a nucleophilic attack on the C1' of the ribose to form the product. After dissociation, two additional enzymatic reactions on the tRNA convert PreQ1 to queuine (Q), resulting in the hypermodified nucleoside queuosine (7-(((4,5-cis-dihydroxy-2-cyclopenten-1-yl)amino)methyl)-7-deazaguanosine). The polypeptide is Queuine tRNA-ribosyltransferase (Shewanella sp. (strain MR-4)).